The chain runs to 144 residues: Putative pre-16S rRNA nuclease (144 aa).

It belongs to the YqgF nuclease family.

It localises to the cytoplasm. Functionally, could be a nuclease involved in processing of the 5'-end of pre-16S rRNA. This Lacticaseibacillus casei (strain BL23) (Lactobacillus casei) protein is Putative pre-16S rRNA nuclease.